The sequence spans 398 residues: Phosphoglycerate kinase (398 aa).

Substrate contacts are provided by residues 23–25 (DFN), arginine 38, 61–64 (HMGK), arginine 122, and arginine 155. ATP is bound by residues lysine 206, glycine 297, glutamate 328, and 354-357 (GGDS).

The protein belongs to the phosphoglycerate kinase family. As to quaternary structure, monomer.

The protein localises to the cytoplasm. It catalyses the reaction (2R)-3-phosphoglycerate + ATP = (2R)-3-phospho-glyceroyl phosphate + ADP. Its pathway is carbohydrate degradation; glycolysis; pyruvate from D-glyceraldehyde 3-phosphate: step 2/5. This Clostridium botulinum (strain Langeland / NCTC 10281 / Type F) protein is Phosphoglycerate kinase.